Here is a 50-residue protein sequence, read N- to C-terminus: Major pollen allergen Ole e 6 (50 aa).

Cystine bridges form between cysteine 8-cysteine 34, cysteine 12-cysteine 30, and cysteine 16-cysteine 26.

In terms of tissue distribution, expressed in pollen.

This chain is Major pollen allergen Ole e 6 (OLE6), found in Olea europaea (Common olive).